The following is a 139-amino-acid chain: Large-conductance mechanosensitive channel (139 aa).

2 consecutive transmembrane segments (helical) span residues 17-37 (VVDM…VTSL) and 88-108 (TVDF…IMAA).

This sequence belongs to the MscL family. In terms of assembly, homopentamer.

The protein resides in the cell inner membrane. Functionally, channel that opens in response to stretch forces in the membrane lipid bilayer. May participate in the regulation of osmotic pressure changes within the cell. The sequence is that of Large-conductance mechanosensitive channel from Porphyromonas gingivalis (strain ATCC 33277 / DSM 20709 / CIP 103683 / JCM 12257 / NCTC 11834 / 2561).